Consider the following 86-residue polypeptide: Apolipoprotein C-I (86 aa).

An N-terminal signal peptide occupies residues 1-26; that stretch reads MRLFLSLPVLVVVLLMILEGPGPAQG.

It belongs to the apolipoprotein C1 family.

The protein localises to the secreted. In terms of biological role, inhibitor of lipoprotein binding to the low density lipoprotein (LDL) receptor, LDL receptor-related protein, and very low density lipoprotein (VLDL) receptor. Associates with high density lipoproteins (HDL) and the triacylglycerol-rich lipoproteins in the plasma and makes up about 10% of the protein of the VLDL and 2% of that of HDL. Appears to interfere directly with fatty acid uptake and is also the major plasma inhibitor of cholesteryl ester transfer protein (CETP). Binds free fatty acids and reduces their intracellular esterification. Modulates the interaction of APOE with beta-migrating VLDL and inhibits binding of beta-VLDL to the LDL receptor-related protein. This is Apolipoprotein C-I (APOC1) from Ateles geoffroyi (Black-handed spider monkey).